A 113-amino-acid polypeptide reads, in one-letter code: Kita-kyushu lung cancer antigen 1 (113 aa).

At 1-3 (MNF) the chain is on the cytoplasmic side. The helical; Signal-anchor for type II membrane protein transmembrane segment at 4–21 (YLLLASSILCALIVFWKY) threads the bilayer. The Extracellular segment spans residues 22–113 (RRFQRNTGEM…RGASPHRKST (92 aa)). Asparagine 83 carries an N-linked (GlcNAc...) asparagine glycan.

As to expression, specifically expressed in testis. Expressed by cancer cell lines.

The protein resides in the cell membrane. This Homo sapiens (Human) protein is Kita-kyushu lung cancer antigen 1 (CT83).